Here is a 156-residue protein sequence, read N- to C-terminus: Small ribosomal subunit protein uS7 (156 aa).

The protein belongs to the universal ribosomal protein uS7 family. In terms of assembly, part of the 30S ribosomal subunit. Contacts proteins S9 and S11.

One of the primary rRNA binding proteins, it binds directly to 16S rRNA where it nucleates assembly of the head domain of the 30S subunit. Is located at the subunit interface close to the decoding center, probably blocks exit of the E-site tRNA. The polypeptide is Small ribosomal subunit protein uS7 (Azorhizobium caulinodans (strain ATCC 43989 / DSM 5975 / JCM 20966 / LMG 6465 / NBRC 14845 / NCIMB 13405 / ORS 571)).